The primary structure comprises 210 residues: DNA-directed RNA polymerases I, II, and III subunit RPABC1 (210 aa).

Methionine 1 is modified (N-acetylmethionine). A Glycyl lysine isopeptide (Lys-Gly) (interchain with G-Cter in SUMO2) cross-link involves residue lysine 81.

The protein belongs to the archaeal Rpo5/eukaryotic RPB5 RNA polymerase subunit family. In terms of assembly, component of the RNA polymerase I (Pol I), RNA polymerase II (Pol II) and RNA polymerase III (Pol III) complexes consisting of at least 13, 12 and 17 subunits, respectively. Pol I complex consists of a ten-subunit catalytic core composed of POLR1A/RPA1, POLR1B/RPA2, POLR1C/RPAC1, POLR1D/RPAC2, POLR1H/RPA12, POLR2E/RPABC1, POLR2F/RPABC2, POLR2H/RPABC3, POLR2K/RPABC4 and POLR2L/RPABC5; a mobile stalk subunit POLR1F/RPA43 protruding from the core and additional subunits homologous to general transcription factors POLR1E/RPA49 and POLR1G/RPA34. Part of Pol I pre-initiation complex (PIC), in which Pol I core assembles with RRN3 and promoter-bound UTBF and SL1/TIF-IB complex. Pol II complex contains a ten-subunit catalytic core composed of POLR2A/RPB1, POLR2B/RPB2, POLR2C/RPB3, POLR2I/RPB9, POLR2J/RPB11, POLR2E/RPABC1, POLR2F/RPABC2, POLR2H/RPABC3, POLR2K/RPABC4 and POLR2L/RPABC5 and a mobile stalk composed of two subunits POLR2D/RPB4 and POLR2G/RPB7. Part of Pol II(G) complex, in which Pol II core associates with an additional subunit POLR2M; unlike conventional Pol II, Pol II(G) functions as a transcriptional repressor. Part of TBP-based Pol II pre-initiation complex (PIC), in which Pol II core assembles with general transcription factors and other specific initiation factors including GTF2E1, GTF2E2, GTF2F1, GTF2F2, TCEA1, ERCC2, ERCC3, GTF2H2, GTF2H3, GTF2H4, GTF2H5, GTF2A1, GTF2A2, GTF2B and TBP; this large multi-subunit PIC complex mediates DNA unwinding and targets Pol II core to the transcription start site where the first phosphodiester bond forms. In Pol II complex, this subunit is present in 2-fold molar excess over the other subunits. Pol III complex consists of a ten-subunit catalytic core composed of POLR3A/RPC1, POLR3B/RPC2, POLR1C/RPAC1, POLR1D/RPAC2, POLR3K/RPC10, POLR2E/RPABC1, POLR2F/RPABC2, POLR2H/RPABC3, POLR2K/RPABC4 and POLR2L/RPABC5; a mobile stalk composed of two subunits POLR3H/RPC8 and CRCP/RPC9, protruding from the core and functioning primarily in transcription initiation; and additional subunits homologous to general transcription factors of the RNA polymerase II machinery, POLR3C/RPC3-POLR3F/RPC6-POLR3G/RPC7 heterotrimer required for transcription initiation and POLR3D/RPC4-POLR3E/RPC5 heterodimer involved in both transcription initiation and termination. Component of the PAQosome complex which is responsible for the biogenesis of several protein complexes and which consists of R2TP complex members RUVBL1, RUVBL2, RPAP3 and PIH1D1, URI complex members PFDN2, PFDN6, PDRG1, UXT and URI1 as well as ASDURF, POLR2E and DNAAF10/WDR92. Interacts with URI1. (Microbial infection) Interacts with HBV protein X.

It is found in the nucleus. The protein localises to the nucleolus. Its function is as follows. DNA-dependent RNA polymerase catalyzes the transcription of DNA into RNA using the four ribonucleoside triphosphates as substrates. Common component of RNA polymerases I, II and III which synthesize ribosomal RNA precursors, mRNA precursors and many functional non-coding RNAs, and small RNAs, such as 5S rRNA and tRNAs, respectively. Pol II is the central component of the basal RNA polymerase II transcription machinery. Pols are composed of mobile elements that move relative to each other. In Pol II, POLR2E/RPABC1 is part of the lower jaw surrounding the central large cleft and thought to grab the incoming DNA template. The sequence is that of DNA-directed RNA polymerases I, II, and III subunit RPABC1 from Homo sapiens (Human).